The primary structure comprises 95 residues: Sec-independent protein translocase protein TatA (95 aa).

Residues 1–21 (MFGRLGAPEIILILVVIILLF) traverse the membrane as a helical segment. Basic and acidic residues predominate over residues 44–55 (AKAMKSEAKADD). The disordered stretch occupies residues 44–95 (AKAMKSEAKADDAAPADPPNPEQSAAQRTIQAAPGDVTSSRPVTEPTDTTKR).

This sequence belongs to the TatA/E family. As to quaternary structure, the Tat system comprises two distinct complexes: a TatABC complex, containing multiple copies of TatA, TatB and TatC subunits, and a separate TatA complex, containing only TatA subunits. Substrates initially bind to the TatABC complex, which probably triggers association of the separate TatA complex to form the active translocon.

It localises to the cell membrane. Its function is as follows. Part of the twin-arginine translocation (Tat) system that transports large folded proteins containing a characteristic twin-arginine motif in their signal peptide across membranes. TatA could form the protein-conducting channel of the Tat system. This chain is Sec-independent protein translocase protein TatA, found in Streptomyces coelicolor (strain ATCC BAA-471 / A3(2) / M145).